Here is a 301-residue protein sequence, read N- to C-terminus: RNA polymerase II holoenzyme cyclin-like subunit (301 aa).

The region spanning 53-142 is the Cyclin N-terminal domain; sequence QQLIKLGKRT…LGECEFALIS (90 aa).

It belongs to the cyclin family. Cyclin C subfamily. In terms of assembly, component of the srb8-11 complex, a regulatory module of the Mediator complex.

The protein localises to the nucleus. Functionally, component of the srb8-11 complex. The srb8-11 complex is a regulatory module of the Mediator complex which is itself involved in regulation of basal and activated RNA polymerase II-dependent transcription. The srb8-11 complex may be involved in the transcriptional repression of a subset of genes regulated by Mediator. It may inhibit the association of the Mediator complex with RNA polymerase II to form the holoenzyme complex. The srb8-11 complex phosphorylates the C-terminal domain (CTD) of the largest subunit of RNA polymerase II. The sequence is that of RNA polymerase II holoenzyme cyclin-like subunit (ssn8) from Aspergillus terreus (strain NIH 2624 / FGSC A1156).